The primary structure comprises 116 residues: Large ribosomal subunit protein bL19 (116 aa).

This sequence belongs to the bacterial ribosomal protein bL19 family.

Its function is as follows. This protein is located at the 30S-50S ribosomal subunit interface and may play a role in the structure and function of the aminoacyl-tRNA binding site. In Fusobacterium nucleatum subsp. nucleatum (strain ATCC 25586 / DSM 15643 / BCRC 10681 / CIP 101130 / JCM 8532 / KCTC 2640 / LMG 13131 / VPI 4355), this protein is Large ribosomal subunit protein bL19.